The chain runs to 733 residues: Probable Rho-GTPase-activating protein 6 (733 aa).

The span at 116–125 (VFNESKSSSP) shows a compositional bias: polar residues. The segment at 116 to 135 (VFNESKSSSPPDAHTDKYFT) is disordered. Phosphothreonine is present on T141. The segment at 174 to 256 (RFDKPSNNGP…SKGSWSSILR (83 aa)) is disordered. Positions 179-195 (SNNGPLGRSSLNLSSLS) are enriched in low complexity. Composition is skewed to polar residues over residues 196–218 (HELQ…SSDT) and 225–240 (PPSS…ASQD). The Rho-GAP domain maps to 312 to 546 (TNLCKFTFPT…GLIIHWPEVL (235 aa)). The tract at residues 692-713 (PVTVTASSETNKKSQKINKKAS) is disordered. The segment covering 704 to 713 (KSQKINKKAS) has biased composition (basic residues).

This is Probable Rho-GTPase-activating protein 6 (rga6) from Schizosaccharomyces pombe (strain 972 / ATCC 24843) (Fission yeast).